The primary structure comprises 632 residues: uncharacterized protein (632 aa).

It belongs to the MG032/MG096/MG288 family.

This is an uncharacterized protein from Mycoplasma pneumoniae (strain ATCC 29342 / M129 / Subtype 1) (Mycoplasmoides pneumoniae).